We begin with the raw amino-acid sequence, 157 residues long: Arginine repressor (157 aa).

Belongs to the ArgR family.

It localises to the cytoplasm. Its pathway is amino-acid biosynthesis; L-arginine biosynthesis [regulation]. Its function is as follows. Regulates arginine biosynthesis genes. In Lactobacillus delbrueckii subsp. bulgaricus (strain ATCC 11842 / DSM 20081 / BCRC 10696 / JCM 1002 / NBRC 13953 / NCIMB 11778 / NCTC 12712 / WDCM 00102 / Lb 14), this protein is Arginine repressor.